The sequence spans 265 residues: Capsule polysaccharide export inner-membrane protein CtrC (265 aa).

Helical transmembrane passes span 37–57 (IGFL…VLMW), 67–84 (TLNI…LMMW), 121–141 (IAGA…IGWI), 148–168 (FYML…GLVI), 178–198 (FGKI…AFFF), and 238–258 (WYIV…VSKF). An ABC transmembrane type-2 domain is found at 37 to 258 (IGFLWLFVEP…LFGLAMVSKF (222 aa)).

It belongs to the ABC-2 integral membrane protein family.

Its subcellular location is the cell inner membrane. In terms of biological role, may form an ATP-driven capsule polysaccharide export apparatus, in association with the CtrB and CtrD proteins. The polypeptide is Capsule polysaccharide export inner-membrane protein CtrC (ctrC) (Neisseria meningitidis serogroup B (strain ATCC BAA-335 / MC58)).